Reading from the N-terminus, the 426-residue chain is Phosphoribosylamine--glycine ligase (426 aa).

The 208-residue stretch at 113–320 (KSLMTEAKIP…LLELLYRAST (208 aa)) folds into the ATP-grasp domain. An ATP-binding site is contributed by 139-200 (LESKSIPIVI…EEFMEGQEAS (62 aa)). Mg(2+) contacts are provided by glutamate 290 and asparagine 292.

It belongs to the GARS family. Mg(2+) is required as a cofactor. The cofactor is Mn(2+).

The catalysed reaction is 5-phospho-beta-D-ribosylamine + glycine + ATP = N(1)-(5-phospho-beta-D-ribosyl)glycinamide + ADP + phosphate + H(+). Its pathway is purine metabolism; IMP biosynthesis via de novo pathway; N(1)-(5-phospho-D-ribosyl)glycinamide from 5-phospho-alpha-D-ribose 1-diphosphate: step 2/2. The protein is Phosphoribosylamine--glycine ligase of Leptospira interrogans serogroup Icterohaemorrhagiae serovar Lai (strain 56601).